A 562-amino-acid chain; its full sequence is 2-succinyl-5-enolpyruvyl-6-hydroxy-3-cyclohexene-1-carboxylate synthase (562 aa).

It belongs to the TPP enzyme family. MenD subfamily. As to quaternary structure, homodimer. The cofactor is Mg(2+). Requires Mn(2+) as cofactor. Thiamine diphosphate is required as a cofactor.

The enzyme catalyses isochorismate + 2-oxoglutarate + H(+) = 5-enolpyruvoyl-6-hydroxy-2-succinyl-cyclohex-3-ene-1-carboxylate + CO2. It participates in quinol/quinone metabolism; 1,4-dihydroxy-2-naphthoate biosynthesis; 1,4-dihydroxy-2-naphthoate from chorismate: step 2/7. The protein operates within cofactor biosynthesis; phylloquinone biosynthesis. Catalyzes the thiamine diphosphate-dependent decarboxylation of 2-oxoglutarate and the subsequent addition of the resulting succinic semialdehyde-thiamine pyrophosphate anion to isochorismate to yield 2-succinyl-5-enolpyruvyl-6-hydroxy-3-cyclohexene-1-carboxylate (SEPHCHC). The chain is 2-succinyl-5-enolpyruvyl-6-hydroxy-3-cyclohexene-1-carboxylate synthase from Thermosynechococcus vestitus (strain NIES-2133 / IAM M-273 / BP-1).